A 296-amino-acid chain; its full sequence is MYQSLLKSLNRLNPRAWDFIQLTRMDKPIGIYLLLWPTLWALWIAGKGSPSLANIVIFVLGVVLTRAGGCVINDWADRKVDGHVKRTAQRPIAAGKISSKEALVFFALLMGVSFLLVLCTNAATIWLSLGGLALAFTYPFMKRYTYYPQVVLGAAFSWGMPMAFTAETGELPATAWLLWIANLLWTVGYDTYYAMTDRDDDLKIGVKSTAILFGDADRVIILTLQVLSLGCLVLAGSKFELGMWFHLGLLVAAGCYAWEFWYTRDRDRMRCFRAFLHNHWAGLAIFVGIVLDYALR.

Transmembrane regions (helical) follow at residues 28-48, 52-72, 102-122, 146-166, 169-189, 219-239, 241-261, and 275-295; these read PIGIYLLLWPTLWALWIAGKG, LANIVIFVLGVVLTRAGGCVI, ALVFFALLMGVSFLLVLCTNA, YYPQVVLGAAFSWGMPMAFTA, GELPATAWLLWIANLLWTVGY, VIILTLQVLSLGCLVLAGSKF, LGMWFHLGLLVAAGCYAWEFW, and FLHNHWAGLAIFVGIVLDYAL.

It belongs to the UbiA prenyltransferase family. It depends on Mg(2+) as a cofactor.

The protein resides in the cell inner membrane. It catalyses the reaction all-trans-octaprenyl diphosphate + 4-hydroxybenzoate = 4-hydroxy-3-(all-trans-octaprenyl)benzoate + diphosphate. It participates in cofactor biosynthesis; ubiquinone biosynthesis. Catalyzes the prenylation of para-hydroxybenzoate (PHB) with an all-trans polyprenyl group. Mediates the second step in the final reaction sequence of ubiquinone-8 (UQ-8) biosynthesis, which is the condensation of the polyisoprenoid side chain with PHB, generating the first membrane-bound Q intermediate 3-octaprenyl-4-hydroxybenzoate. This chain is 4-hydroxybenzoate octaprenyltransferase, found in Pseudomonas fluorescens (strain Pf0-1).